A 77-amino-acid chain; its full sequence is U14-theraphotoxin-Cg1a 3 (77 aa).

The signal sequence occupies residues 1 to 21 (MKTSVLLVILGIAAITVQCTA). The propeptide occupies 22–49 (SESVEQDSLRTFVDTVLGWNAEMASEAR). Disulfide bonds link Cys50-Cys64, Cys57-Cys69, and Cys63-Cys75. Lys77 carries the lysine amide modification.

This sequence belongs to the neurotoxin 10 (Hwtx-1) family. 65 (Jztx-21) subfamily. In terms of tissue distribution, expressed by the venom gland.

Its subcellular location is the secreted. Probable ion channel inhibitor. In Chilobrachys guangxiensis (Chinese earth tiger tarantula), this protein is U14-theraphotoxin-Cg1a 3.